The sequence spans 762 residues: Endothelin-converting enzyme 1 (762 aa).

The Cytoplasmic segment spans residues 1–60; sequence MGSLRPPQGLGLQWSSFFLGKKGPGLTVSLPLLASSLQVNFRSPRSGQRCWAARTSVEKR. Residues 61–81 form a helical; Signal-anchor for type II membrane protein membrane-spanning segment; it reads LVVLVTLLAAGLVACLAALGI. Residues 82-762 lie on the Extracellular side of the membrane; the sequence is QYRTRTPPVC…MNPRHKCEVW (681 aa). The 673-residue stretch at 90–762 folds into the Peptidase M13 domain; the sequence is VCLTEACVSV…MNPRHKCEVW (673 aa). Cystine bridges form between C91/C96, C114/C747, C122/C707, C177/C427, and C636/C759. 8 N-linked (GlcNAc...) asparagine glycosylation sites follow: N158, N179, N202, N262, N308, N354, N375, and N531. H599 provides a ligand contact to Zn(2+). E600 is an active-site residue. H603 contacts Zn(2+). 2 N-linked (GlcNAc...) asparagine glycosylation sites follow: N624 and N643. E659 lines the Zn(2+) pocket. D663 serves as the catalytic Proton donor.

The protein belongs to the peptidase M13 family. As to quaternary structure, homodimer; disulfide-linked. Interacts with PPP1R16B. Interacts with TSPAN8; this interaction recruits the endothelin converting enzyme ECE1 to tetraspanin-enriched microdomains and positively modulates its enzymatic activity. Requires Zn(2+) as cofactor. As to expression, all isoforms are expressed in aortic endothelial cells. Isoform A is also expressed in liver; isoform B in smooth muscle cells and fibroblasts; isoform C in aortic endothelial cells, smooth muscle cells, fibroblasts, liver and lung, and isoform D in smooth muscle cells.

It localises to the cell membrane. The enzyme catalyses Hydrolysis of the 21-Trp-|-Val-22 bond in big endothelin to form endothelin 1.. With respect to regulation, inhibited by phosphoramidon. Functionally, converts big endothelin-1 to endothelin-1. The chain is Endothelin-converting enzyme 1 (Ece1) from Rattus norvegicus (Rat).